Reading from the N-terminus, the 377-residue chain is Sodium-dependent organic anion transporter (377 aa).

The Extracellular segment spans residues 1 to 29 (MRANCSSGLACPANSSEEELPEGLKAFGN). A glycan (N-linked (GlcNAc...) asparagine) is linked at Asn4. The chain crosses the membrane as a helical span at residues 30–50 (LDLVFTVVSALMIGLLMFSLG). Residues 51–67 (CSVEVQKLWGHIRRPWG) lie on the Cytoplasmic side of the membrane. Residues 68–88 (IAVGMLCQFGLMPLIAYLLII) form a helical membrane-spanning segment. The Extracellular portion of the chain corresponds to 89-97 (SFSLKPLQA). Residues 98–118 (IAVLIMGCCPGGTVSNIFTFW) traverse the membrane as a helical segment. At 119–133 (VDGDMDLSISMTTCS) the chain is on the cytoplasmic side. A helical membrane pass occupies residues 134–154 (TMAALGMMPLCLYLYTLSWNL). The Extracellular segment spans residues 155 to 159 (EQNLT). Residue Asn157 is glycosylated (N-linked (GlcNAc...) asparagine). A helical transmembrane segment spans residues 160–180 (IPYQNIGITLVCLIIPVAFGI). The Cytoplasmic portion of the chain corresponds to 181-195 (YVNYRWPKQSKIILK). The chain crosses the membrane as a helical span at residues 196–216 (IGAIAGGLLFLVVTGAGMVLM). At 217-223 (KEFWSSD) the chain is on the extracellular side. The chain crosses the membrane as a helical span at residues 224-244 (IILLMISFIFPLIGHATGFLL). The Cytoplasmic portion of the chain corresponds to 245–257 (ALLTHQSWQRCRT). A helical membrane pass occupies residues 258-278 (ISLETGTQNVQMCFTMLQLSF). Residues 279–285 (TAEQLVQ) lie on the Extracellular side of the membrane. A helical transmembrane segment spans residues 286-306 (IFGFVLAYGLFQMLNGFFMVA). Over 307-377 (AYKMYKRRLK…TPTGDIARAK (71 aa)) the chain is Cytoplasmic. The interval 319–377 (HGNEKPSCQEARHRKKSTSPKETTAFLEVNEEATLSPGPSGPVDPHGAPTPTGDIARAK) is disordered.

The protein belongs to the bile acid:sodium symporter (BASS) (TC 2.A.28) family. In terms of processing, glycosylated.

Its subcellular location is the membrane. It catalyses the reaction estrone 3-sulfate(out) + 2 Na(+)(out) = estrone 3-sulfate(in) + 2 Na(+)(in). It carries out the reaction 17beta-estradiol 3-sulfate(out) + 2 Na(+)(out) = 17beta-estradiol 3-sulfate(in) + 2 Na(+)(in). The catalysed reaction is dehydroepiandrosterone 3-sulfate(out) + 2 Na(+)(out) = dehydroepiandrosterone 3-sulfate(in) + 2 Na(+)(in). The enzyme catalyses androst-5-ene-diol 3-sulfate(out) + 2 Na(+)(out) = androst-5-ene-diol 3-sulfate(in) + 2 Na(+)(in). It catalyses the reaction pregnenolone sulfate(out) + 2 Na(+)(out) = pregnenolone sulfate(in) + 2 Na(+)(in). It carries out the reaction taurolithocholate 3-sulfate(out) + 2 Na(+)(out) = taurolithocholate 3-sulfate(in) + 2 Na(+)(in). The catalysed reaction is androsterone 3alpha-sulfate(out) + 2 Na(+)(out) = androsterone 3alpha-sulfate(in) + 2 Na(+)(in). The enzyme catalyses 5alpha-dihydrotestosterone sulfate(out) + 2 Na(+)(out) = 5alpha-dihydrotestosterone sulfate(in) + 2 Na(+)(in). It catalyses the reaction 17beta-estradiol 17-sulfate(out) + 2 Na(+)(out) = 17beta-estradiol 17-sulfate(in) + 2 Na(+)(in). It carries out the reaction 17alpha-hydroxypregnenolone 3-sulfate(out) + 2 Na(+)(out) = 17alpha-hydroxypregnenolone 3-sulfate(in) + 2 Na(+)(in). The catalysed reaction is epiandrosterone 3-sulfate(out) + 2 Na(+)(out) = epiandrosterone 3-sulfate(in) + 2 Na(+)(in). The enzyme catalyses epitestosterone 17-sulfate(out) + 2 Na(+)(out) = epitestosterone 17-sulfate(in) + 2 Na(+)(in). It catalyses the reaction testosterone 17-sulfate(out) + 2 Na(+)(out) = testosterone 17-sulfate(in) + 2 Na(+)(in). It carries out the reaction 16alpha-hydroxydehydroepiandrosterone 3-sulfate(out) + 2 Na(+)(out) = 16alpha-hydroxydehydroepiandrosterone 3-sulfate(in) + 2 Na(+)(in). Transports sulfoconjugated steroid hormones from the extracellular compartment into the cytosol in a sodium-dependent manner without hydrolysis. Steroid sulfate hormones are commonly considered to be biologically inactive metabolites, that may be activated by steroid sulfatases into free steroids. May play an important role by delivering sulfoconjugated steroids to specific target cells in reproductive organs. May play a role transporting the estriol precursor 16alpha-hydroxydehydroepiandrosterone 3-sulfate (16a-OH-DHEAS) at the fetal blood vessel endothelium. Can also transport other sulfoconjugated molecules such as taurolithocholic acid-3-sulfate and sulfoconjugated pyrenes. The sequence is that of Sodium-dependent organic anion transporter (SLC10A6) from Bos taurus (Bovine).